The sequence spans 285 residues: Non-structural protein 3c (285 aa).

This is Non-structural protein 3c from Bat coronavirus 133/2005 (BtCoV).